A 332-amino-acid chain; its full sequence is Biotin synthase (332 aa).

In terms of domain architecture, Radical SAM core spans 51-279 (YKVQLASLLS…RSRVRLSAGR (229 aa)). Cys-66, Cys-70, and Cys-73 together coordinate [4Fe-4S] cluster. [2Fe-2S] cluster is bound by residues Cys-110, Cys-142, Cys-202, and Arg-274.

This sequence belongs to the radical SAM superfamily. Biotin synthase family. In terms of assembly, homodimer. [4Fe-4S] cluster serves as cofactor. Requires [2Fe-2S] cluster as cofactor.

It catalyses the reaction (4R,5S)-dethiobiotin + (sulfur carrier)-SH + 2 reduced [2Fe-2S]-[ferredoxin] + 2 S-adenosyl-L-methionine = (sulfur carrier)-H + biotin + 2 5'-deoxyadenosine + 2 L-methionine + 2 oxidized [2Fe-2S]-[ferredoxin]. Its pathway is cofactor biosynthesis; biotin biosynthesis; biotin from 7,8-diaminononanoate: step 2/2. Its function is as follows. Catalyzes the conversion of dethiobiotin (DTB) to biotin by the insertion of a sulfur atom into dethiobiotin via a radical-based mechanism. The chain is Biotin synthase from Prochlorococcus marinus (strain SARG / CCMP1375 / SS120).